A 1517-amino-acid polypeptide reads, in one-letter code: DNA-directed RNA polymerase subunit beta' (1517 aa).

4 residues coordinate Zn(2+): Cys-71, Cys-73, Cys-86, and Cys-89. The Mg(2+) site is built by Asp-482, Asp-484, and Asp-486. Residues Cys-812, Cys-886, Cys-893, and Cys-896 each coordinate Zn(2+).

This sequence belongs to the RNA polymerase beta' chain family. In terms of assembly, the RNAP catalytic core consists of 2 alpha, 1 beta, 1 beta' and 1 omega subunit. When a sigma factor is associated with the core the holoenzyme is formed, which can initiate transcription. Mg(2+) serves as cofactor. Requires Zn(2+) as cofactor.

The catalysed reaction is RNA(n) + a ribonucleoside 5'-triphosphate = RNA(n+1) + diphosphate. In terms of biological role, DNA-dependent RNA polymerase catalyzes the transcription of DNA into RNA using the four ribonucleoside triphosphates as substrates. The polypeptide is DNA-directed RNA polymerase subunit beta' (Campylobacter jejuni subsp. jejuni serotype O:6 (strain 81116 / NCTC 11828)).